The primary structure comprises 242 residues: Segregation and condensation protein A (242 aa).

It belongs to the ScpA family. As to quaternary structure, component of a cohesin-like complex composed of ScpA, ScpB and the Smc homodimer, in which ScpA and ScpB bind to the head domain of Smc. The presence of the three proteins is required for the association of the complex with DNA.

It localises to the cytoplasm. Its function is as follows. Participates in chromosomal partition during cell division. May act via the formation of a condensin-like complex containing Smc and ScpB that pull DNA away from mid-cell into both cell halves. In Streptococcus pneumoniae (strain Taiwan19F-14), this protein is Segregation and condensation protein A.